Reading from the N-terminus, the 155-residue chain is Small ribosomal subunit protein uS7c (155 aa).

Belongs to the universal ribosomal protein uS7 family. As to quaternary structure, part of the 30S ribosomal subunit.

It localises to the plastid. It is found in the chloroplast. Functionally, one of the primary rRNA binding proteins, it binds directly to 16S rRNA where it nucleates assembly of the head domain of the 30S subunit. This Typha angustifolia (Narrow leaf cattail) protein is Small ribosomal subunit protein uS7c (rps7).